Here is a 244-residue protein sequence, read N- to C-terminus: Probable metallo-hydrolase YhfI (244 aa).

Residues His59, His61, Asp63, His64, His134, Asp155, and His211 each coordinate Zn(2+).

This sequence belongs to the metallo-beta-lactamase superfamily. Requires Zn(2+) as cofactor.

This Bacillus subtilis (strain 168) protein is Probable metallo-hydrolase YhfI (yhfI).